Consider the following 400-residue polypeptide: Argininosuccinate synthase (400 aa).

Residues 10–18 (AYSGGVDTS) and alanine 38 each bind ATP. Tyrosine 89 contributes to the L-citrulline binding site. Glycine 119 is an ATP binding site. Positions 121, 125, and 126 each coordinate L-aspartate. An L-citrulline-binding site is contributed by asparagine 125. L-citrulline is bound by residues arginine 129, serine 177, serine 186, glutamate 262, and tyrosine 274.

The protein belongs to the argininosuccinate synthase family. Type 1 subfamily. Homotetramer.

It is found in the cytoplasm. It carries out the reaction L-citrulline + L-aspartate + ATP = 2-(N(omega)-L-arginino)succinate + AMP + diphosphate + H(+). It functions in the pathway amino-acid biosynthesis; L-arginine biosynthesis; L-arginine from L-ornithine and carbamoyl phosphate: step 2/3. The chain is Argininosuccinate synthase from Nostoc sp. (strain PCC 7120 / SAG 25.82 / UTEX 2576).